A 763-amino-acid polypeptide reads, in one-letter code: MHTGGETSACKPSSVRLAPSFSFHAAGLQMAGQMPHSHQYSDRRQPNISDQQVSALSYSDQIQQPLTNQVMPDIVMLQRRMPQTFRDPATAPLRKLSVDLIKTYKHINEVYYAKKKRRHQQGQGDDSSHKKERKVYNDGYDDDNYDYIVKNGEKWMDRYEIDSLIGKGSFGQVVKAYDRVEQEWVAIKIIKNKKAFLNQAQIEVRLLELMNKHDTEMKYYIVHLKRHFMFRNHLCLVFEMLSYNLYDLLRNTNFRGVSLNLTRKFAQQMCTALLFLATPELSIIHCDLKPENILLCNPKRSAIKIVDFGSSCQLGQRIYQYIQSRFYRSPEVLLGMPYDLAIDMWSLGCILVEMHTGEPLFSGANEVDQMNKIVEVLGIPPAHILDQAPKARKFFEKLPDGTWNLKKTKDGKREYKPPGTRKLHNILGVETGGPGGRRAGESGHTVADYLKFKDLILRMLDYDPKTRIQPYYALQHSFFKKTADEGTNTSNSVSTSPAMEQSQSSGTTSSTSSSSGGSSGTSNSGRARSDPTHQHRHSGGHFTAAVQAMDCETHSPQVRQQFPAPLGWSGTEAPTQVTVETHPVQETTFHVAPQQNALHHHHGNSSHHHHHHHHHHHHHGQQALGNRTRPRVYNSPTNSSSTQDSMEVGHSHHSMTSLSSSTTSSSTSSSSTGNQGNQAYQNRPVAANTLDFGQNGAMDVNLTVYSNPRQETGIAGHPTYQFSANTGPAHYMTEGHLTMRQGADREESPMTGVCVQQSPVASS.

Ser14 carries the post-translational modification Phosphoserine. The segment at 32–57 is disordered; the sequence is GQMPHSHQYSDRRQPNISDQQVSALS. A compositionally biased stretch (polar residues) spans 46 to 57; sequence PNISDQQVSALS. Tyr111 is subject to Phosphotyrosine; by autocatalysis. Positions 115–136 are disordered; that stretch reads KKRRHQQGQGDDSSHKKERKVY. Positions 117-134 match the Bipartite nuclear localization signal motif; the sequence is RRHQQGQGDDSSHKKERK. At Tyr140 the chain carries Phosphotyrosine; by autocatalysis. The residue at position 145 (Tyr145) is a Phosphotyrosine. At Tyr159 the chain carries Phosphotyrosine; by autocatalysis. In terms of domain architecture, Protein kinase spans 159-479; sequence YEIDSLIGKG…PYYALQHSFF (321 aa). ATP is bound at residue 165 to 173; sequence IGKGSFGQV. A Phosphotyrosine; by autocatalysis modification is found at Tyr177. Lys188 serves as a coordination point for ATP. Residue Tyr219 is modified to Phosphotyrosine; by autocatalysis. Residue 238–241 coordinates ATP; it reads FEML. The active-site Proton acceptor is Asp287. At Ser310 the chain carries Phosphoserine; by autocatalysis. A phosphotyrosine; by autocatalysis mark is found at Tyr319 and Tyr321. Thr402 bears the Phosphothreonine; by autocatalysis mark. Residues 408–442 form a disordered region; sequence TKDGKREYKPPGTRKLHNILGVETGGPGGRRAGES. Residue Tyr449 is modified to Phosphotyrosine; by autocatalysis. Polar residues predominate over residues 485-501; sequence EGTNTSNSVSTSPAMEQ. Disordered regions lie at residues 485–540, 596–679, and 744–763; these read EGTN…HSGG, NALH…GNQA, and DREE…VASS. Low complexity predominate over residues 502–525; that stretch reads SQSSGTTSSTSSSSGGSSGTSNSG. Phosphoserine is present on residues Ser529 and Ser538. Residues 595 to 625 are histidine-rich domain (HRD); it reads QNALHHHHGNSSHHHHHHHHHHHHHGQQALG. The span at 598–620 shows a compositional bias: basic residues; it reads LHHHHGNSSHHHHHHHHHHHHHG. The span at 634–645 shows a compositional bias: polar residues; it reads NSPTNSSSTQDS. Low complexity predominate over residues 654–672; it reads SMTSLSSSTTSSSTSSSST. 2 positions are modified to phosphoserine: Ser748 and Ser758. The segment covering 754–763 has biased composition (polar residues); it reads CVQQSPVASS.

It belongs to the protein kinase superfamily. CMGC Ser/Thr protein kinase family. MNB/DYRK subfamily. In terms of assembly, interacts with RAD54L2/ARIP4. Interacts with CRY2. Interacts with RANBP9. Interacts with WDR68. Interacts with SIRT1. As to quaternary structure, (Microbial infection) Interacts with human adenovirus 5 E1A protein. In terms of processing, autophosphorylated on numerous tyrosine residues. Can also autophosphorylate on serine and threonine residues (in vitro). Ubiquitous. Highest levels in skeletal muscle, testis, fetal lung and fetal kidney.

It localises to the nucleus. It is found in the nucleus speckle. It catalyses the reaction L-seryl-[protein] + ATP = O-phospho-L-seryl-[protein] + ADP + H(+). The enzyme catalyses L-threonyl-[protein] + ATP = O-phospho-L-threonyl-[protein] + ADP + H(+). It carries out the reaction L-tyrosyl-[protein] + ATP = O-phospho-L-tyrosyl-[protein] + ADP + H(+). The catalysed reaction is [DNA-directed RNA polymerase] + ATP = phospho-[DNA-directed RNA polymerase] + ADP + H(+). Inhibited by RANBP9. Inhibited by harmine, leucettamine B and leucettine L41. Dual-specificity kinase which possesses both serine/threonine and tyrosine kinase activities. Exhibits a substrate preference for proline at position P+1 and arginine at position P-3. Plays an important role in double-strand breaks (DSBs) repair following DNA damage. Mechanistically, phosphorylates RNF169 and increases its ability to block accumulation of TP53BP1 at the DSB sites thereby promoting homologous recombination repair (HRR). Also acts as a positive regulator of transcription by acting as a CTD kinase that mediates phosphorylation of the CTD (C-terminal domain) of the large subunit of RNA polymerase II (RNAP II) POLR2A. May play a role in a signaling pathway regulating nuclear functions of cell proliferation. Modulates alternative splicing by phosphorylating the splice factor SRSF6. Has pro-survival function and negatively regulates the apoptotic process. Promotes cell survival upon genotoxic stress through phosphorylation of SIRT1. This in turn inhibits p53/TP53 activity and apoptosis. Phosphorylates SEPTIN4, SEPTIN5 and SF3B1 at 'Thr-434'. This Homo sapiens (Human) protein is Dual specificity tyrosine-phosphorylation-regulated kinase 1A.